The following is a 579-amino-acid chain: MRNATSWSLYRRLLSYVRPYWKAFLAAVVGYAIYAASSTALAEMMKRLIDGIQNPDAAFRLMLPLFVIGMFAARGVGTFLGTYYMSDVARNVVHALRCEVFNHMLRLPGRFFDMHSSGHLLSRVTYHVEQVTGAATNAITIILREGLFVIGLVSYLLWTNWMLTLIFMAVTPLIGLVVNYTSKRFRRLSRRIQNSMGDVTHVASEALSGYRVVRTHGAEAYEKARFAEASDYNREQSMKVALTKAVSTPVIQLLVALSLAGLVWLAMSPALMASMTPGEFVAFITAASLMAKPVRQLTEVNSTIQKGLSASQELFGLLEQPPEVDEGSYVPARIDGRVRFEGVRFRYGEDQAEVLKGIDLDVPQGEMIAIVGRSGSGKSTLVSLMPRFYRPTEGRVLLDDVDIQEYALSPLRQRIALVSQQVTLFNTTIAANIAYGHPDADREAVESAARSAYAHEFIERLPNGYDTVVGDNGVMLSGGQRQRLAIARAIFKDAPLLVLDEATSALDTESERYIQQALERVCRGRTTFVIAHRLSTIERADRILVMEQGEIIESGTHGELLAQDGAYAALHQLQFQEAE.

A run of 4 helical transmembrane segments spans residues 24-44, 61-81, 147-167, and 253-273; these read FLAA…LAEM, LMLP…TFLG, LFVI…TLIF, and LLVA…ALMA. Residues 25 to 306 enclose the ABC transmembrane type-1 domain; it reads LAAVVGYAIY…LTEVNSTIQK (282 aa). In terms of domain architecture, ABC transporter spans 338-573; sequence VRFEGVRFRY…DGAYAALHQL (236 aa). 372-379 contributes to the ATP binding site; it reads GRSGSGKS.

This sequence belongs to the ABC transporter superfamily. Lipid exporter (TC 3.A.1.106) family. As to quaternary structure, homodimer.

It localises to the cell inner membrane. It catalyses the reaction ATP + H2O + lipid A-core oligosaccharideSide 1 = ADP + phosphate + lipid A-core oligosaccharideSide 2.. Its function is as follows. Involved in lipopolysaccharide (LPS) biosynthesis. Translocates lipid A-core from the inner to the outer leaflet of the inner membrane. Transmembrane domains (TMD) form a pore in the inner membrane and the ATP-binding domain (NBD) is responsible for energy generation. The protein is ATP-dependent lipid A-core flippase of Chromohalobacter salexigens (strain ATCC BAA-138 / DSM 3043 / CIP 106854 / NCIMB 13768 / 1H11).